We begin with the raw amino-acid sequence, 257 residues long: Deoxyribose-phosphate aldolase (257 aa).

Catalysis depends on Asp-102, which acts as the Proton donor/acceptor. The Schiff-base intermediate with acetaldehyde role is filled by Lys-165. The active-site Proton donor/acceptor is the Lys-199.

This sequence belongs to the DeoC/FbaB aldolase family. DeoC type 2 subfamily.

It is found in the cytoplasm. It carries out the reaction 2-deoxy-D-ribose 5-phosphate = D-glyceraldehyde 3-phosphate + acetaldehyde. The protein operates within carbohydrate degradation; 2-deoxy-D-ribose 1-phosphate degradation; D-glyceraldehyde 3-phosphate and acetaldehyde from 2-deoxy-alpha-D-ribose 1-phosphate: step 2/2. Its function is as follows. Catalyzes a reversible aldol reaction between acetaldehyde and D-glyceraldehyde 3-phosphate to generate 2-deoxy-D-ribose 5-phosphate. This Photobacterium profundum (strain SS9) protein is Deoxyribose-phosphate aldolase.